Consider the following 272-residue polypeptide: 3-methyl-2-oxobutanoate hydroxymethyltransferase (272 aa).

Mg(2+) contacts are provided by Asp-43 and Asp-82. Residues 43 to 44 (DS), Asp-82, and Lys-112 contribute to the 3-methyl-2-oxobutanoate site. Glu-114 is a binding site for Mg(2+). The active-site Proton acceptor is the Glu-179.

It belongs to the PanB family. As to quaternary structure, homodecamer; pentamer of dimers. It depends on Mg(2+) as a cofactor.

It localises to the cytoplasm. It catalyses the reaction 3-methyl-2-oxobutanoate + (6R)-5,10-methylene-5,6,7,8-tetrahydrofolate + H2O = 2-dehydropantoate + (6S)-5,6,7,8-tetrahydrofolate. It participates in cofactor biosynthesis; (R)-pantothenate biosynthesis; (R)-pantoate from 3-methyl-2-oxobutanoate: step 1/2. Functionally, catalyzes the reversible reaction in which hydroxymethyl group from 5,10-methylenetetrahydrofolate is transferred onto alpha-ketoisovalerate to form ketopantoate. The sequence is that of 3-methyl-2-oxobutanoate hydroxymethyltransferase from Staphylococcus aureus (strain bovine RF122 / ET3-1).